The following is an 891-amino-acid chain: MSSTLREASKDTLQAKDKTYHYYSLPLAAKSLGDITRLPKSLKVLLENLLRWQDGNSVTEEDIHALAGWLKNAHADREIAYRPARVLMQDFTGVPAVVDLAAMREAVKRLGGDTAKVNPLSPVDLVIDHSVTVDRFGDDEAFEENVRLEMERNHERYVFLKWGKQAFSRFSVVPPGTGICHQVNLEYLGKAVWSELQDGEWIAYPDTLVGTDSHTTMINGLGVLGWGVGGIEAEAAMLGQPVSMLIPDVVGFKLTGKLREGITATDLVLTVTQMLRKHGVVGKFVEFYGDGLDSLPLADRATIANMSPEYGATCGFFPIDAVTLDYMRLSGRSEDQVELVEKYAKAQGMWRNPGDEPIFTSTLELDMNDVEASLAGPKRPQDRVALPDVPKAFAASNELEVNATHKDRQPVDYVMNGHQYQLPDGAVVIAAITSCTNTSNPSVLMAAGLLAKKAVTLGLKRQPWVKASLAPGSKVVSDYLAKAKLTPYLDELGFNLVGYGCTTCIGNSGPLPDPIETAIKKSDLTVGAVLSGNRNFEGRIHPLVKTNWLASPPLVVAYALAGNMNINLASEPIGHDRKGDPVYLKDIWPSAQEIARAVEQVSTEMFRKEYAEVFEGTAEWKGINVTRSDTYGWQEDSTYIRLSPFFDEMQATPAPVEDIHGARILAMLGDSVTTDHISPAGSIKPDSPAGRYLQGRGVERKDFNSYGSRRGNHEVMMRGTFANIRIRNEMVPGVEGGMTRHLPDSDVVSIYDAAMRYKQEQTPLAVIAGKEYGSGSSRDWAAKGPRLLGIRVVIAESFERIHRSNLIGMGILPLEFPQGVTRKTLGLTGEEKIDIGDLQNLQPGATVPVTLTRADGSQEVVPCRCRIDTATELTYYQNDGILHYVIRNMLK.

Residues Cys-435, Cys-501, and Cys-504 each coordinate [4Fe-4S] cluster.

It belongs to the aconitase/IPM isomerase family. In terms of assembly, monomer. Requires [4Fe-4S] cluster as cofactor.

The catalysed reaction is citrate = D-threo-isocitrate. Its pathway is carbohydrate metabolism; tricarboxylic acid cycle; isocitrate from oxaloacetate: step 2/2. Functionally, catalyzes the reversible isomerization of citrate to isocitrate via cis-aconitate. The apo form of AcnA functions as a RNA-binding regulatory protein which plays a role as a maintenance or survival enzyme during nutritional or oxidative stress. During oxidative stress inactive AcnA apo-enzyme without iron sulfur clusters binds the acnA mRNA 3' UTRs (untranslated regions), stabilizes acnA mRNA and increases AcnA synthesis, thus mediating a post-transcriptional positive autoregulatory switch. AcnA also enhances the stability of the sodA transcript. In Escherichia coli (strain K12), this protein is Aconitate hydratase A.